A 175-amino-acid polypeptide reads, in one-letter code: Adenine phosphoribosyltransferase (175 aa).

This sequence belongs to the purine/pyrimidine phosphoribosyltransferase family. As to quaternary structure, homodimer.

Its subcellular location is the cytoplasm. The catalysed reaction is AMP + diphosphate = 5-phospho-alpha-D-ribose 1-diphosphate + adenine. It participates in purine metabolism; AMP biosynthesis via salvage pathway; AMP from adenine: step 1/1. In terms of biological role, catalyzes a salvage reaction resulting in the formation of AMP, that is energically less costly than de novo synthesis. The polypeptide is Adenine phosphoribosyltransferase (Thermosipho melanesiensis (strain DSM 12029 / CIP 104789 / BI429)).